The primary structure comprises 523 residues: UPF0329 protein ECU02_0050 (523 aa).

Positions 326 to 386 are disordered; sequence EEKAKSKKRG…KTGKKSEGGR (61 aa). Residues 330–339 show a composition bias toward basic residues; it reads KSKKRGKRKS. Residues 344–353 are compositionally biased toward basic and acidic residues; the sequence is EAKEEEKKES. Acidic residues predominate over residues 354–368; the sequence is ETEEVEAGEEVEMPS.

This sequence belongs to the UPF0329 family.

The chain is UPF0329 protein ECU02_0050 from Encephalitozoon cuniculi (strain GB-M1) (Microsporidian parasite).